The primary structure comprises 129 residues: Large ribosomal subunit protein bL12 (129 aa).

It belongs to the bacterial ribosomal protein bL12 family. In terms of assembly, homodimer. Part of the ribosomal stalk of the 50S ribosomal subunit. Forms a multimeric L10(L12)X complex, where L10 forms an elongated spine to which 2 to 4 L12 dimers bind in a sequential fashion. Binds GTP-bound translation factors.

Its function is as follows. Forms part of the ribosomal stalk which helps the ribosome interact with GTP-bound translation factors. Is thus essential for accurate translation. This Thermosipho melanesiensis (strain DSM 12029 / CIP 104789 / BI429) protein is Large ribosomal subunit protein bL12.